Consider the following 582-residue polypeptide: Potassium-transporting ATPase potassium-binding subunit (582 aa).

The next 10 helical transmembrane spans lie at 11-31, 81-101, 148-168, 195-215, 272-292, 298-318, 379-399, 401-421, 439-459, and 551-571; these read AVFFTILAVLVFVAGEYLAWV, LKAVLVFNVCIWVLLFVVLMF, FGIGIAMFLTPATGLALMPAF, LLPISLLIAIILMAEGSVQTI, VLTLAMPIGTFSAIYAWGAWV, GVAIVAAFFVIYMALTGVAVV, ALGAFSLLFAFATNNISNGVG, GLLNILMFVILTAFIGALMIG, VFVVILVLPILVLIPQAAAVV, and GLLIGVIIIVSALVFLPALVF.

Belongs to the KdpA family. The system is composed of three essential subunits: KdpA, KdpB and KdpC.

The protein resides in the cell membrane. In terms of biological role, part of the high-affinity ATP-driven potassium transport (or Kdp) system, which catalyzes the hydrolysis of ATP coupled with the electrogenic transport of potassium into the cytoplasm. This subunit binds the extracellular potassium ions and delivers the ions to the membrane domain of KdpB through an intramembrane tunnel. The sequence is that of Potassium-transporting ATPase potassium-binding subunit from Halobacterium salinarum (strain ATCC 700922 / JCM 11081 / NRC-1) (Halobacterium halobium).